Reading from the N-terminus, the 172-residue chain is Bacilliredoxin SRU_0242 (172 aa).

Positions 141 to 172 are disordered; the sequence is TDEAPPSDAPSRPDLSSSPNAGGLPSTFQSIS. Positions 154 to 172 are enriched in polar residues; that stretch reads DLSSSPNAGGLPSTFQSIS.

It belongs to the bacilliredoxin family.

This is Bacilliredoxin SRU_0242 from Salinibacter ruber (strain DSM 13855 / M31).